A 134-amino-acid polypeptide reads, in one-letter code: Large ribosomal subunit protein uL16c (134 aa).

The segment covering 1-17 has biased composition (basic residues); the sequence is MLSPKRTRFRKQHRGRM. The disordered stretch occupies residues 1–21; that stretch reads MLSPKRTRFRKQHRGRMKGIS.

Belongs to the universal ribosomal protein uL16 family. Part of the 50S ribosomal subunit.

It is found in the plastid. It localises to the chloroplast. This chain is Large ribosomal subunit protein uL16c, found in Solanum bulbocastanum (Wild potato).